The following is a 512-amino-acid chain: 2,3-bisphosphoglycerate-independent phosphoglycerate mutase (512 aa).

The Mn(2+) site is built by Asp11 and Ser61. The active-site Phosphoserine intermediate is the Ser61. Substrate contacts are provided by residues His122, Arg152–Asp153, Arg184, Arg190, Arg259–Arg262, and Lys332. The Mn(2+) site is built by Asp399, His403, Asp440, His441, and His459.

Belongs to the BPG-independent phosphoglycerate mutase family. As to quaternary structure, monomer. Mn(2+) is required as a cofactor.

The catalysed reaction is (2R)-2-phosphoglycerate = (2R)-3-phosphoglycerate. It functions in the pathway carbohydrate degradation; glycolysis; pyruvate from D-glyceraldehyde 3-phosphate: step 3/5. Its function is as follows. Catalyzes the interconversion of 2-phosphoglycerate and 3-phosphoglycerate. This chain is 2,3-bisphosphoglycerate-independent phosphoglycerate mutase, found in Francisella tularensis subsp. holarctica (strain FTNF002-00 / FTA).